The primary structure comprises 118 residues: MSNILAVFNPPPQRELEKEETMDCVPCQVMSTMFSVGFGSYLASGKPFKYGKKEAKRGISLTEFEKRNPQWWKVTLRSFGGLLIAFGFVRGTEGWLWHKNKEYKNYKKLSNDGETQAN.

This sequence to S.pombe tam6.

The protein resides in the mitochondrion. This is an uncharacterized protein from Saccharomyces cerevisiae (strain ATCC 204508 / S288c) (Baker's yeast).